The primary structure comprises 192 residues: uncharacterized protein (192 aa).

The 132-residue stretch at 29–160 (HRQAAVLIPI…PLDIYRRGDS (132 aa)) folds into the Nudix hydrolase domain. The Nudix box signature appears at 67–89 (GAVDDTDASVIAAALREAEEEVA). E83 and E87 together coordinate Mg(2+).

This sequence belongs to the Nudix hydrolase family. PCD1 subfamily. Requires Mn(2+) as cofactor. The cofactor is Mg(2+).

In terms of biological role, probably mediates the hydrolysis of some nucleoside diphosphate derivatives. This is an uncharacterized protein from Escherichia coli (strain SMS-3-5 / SECEC).